Consider the following 272-residue polypeptide: HMP-PP phosphatase (272 aa).

Catalysis depends on Asp8, which acts as the Nucleophile. Asp8, Asp10, and Asp212 together coordinate Mg(2+).

Belongs to the HAD-like hydrolase superfamily. Cof family. Mg(2+) is required as a cofactor.

The enzyme catalyses 4-amino-2-methyl-5-(diphosphooxymethyl)pyrimidine + H2O = 4-amino-2-methyl-5-(phosphooxymethyl)pyrimidine + phosphate + H(+). In terms of biological role, catalyzes the hydrolysis of 4-amino-2-methyl-5-hydroxymethylpyrimidine pyrophosphate (HMP-PP) to 4-amino-2-methyl-5-hydroxymethylpyrimidine phosphate (HMP-P). The chain is HMP-PP phosphatase from Salmonella enteritidis PT4 (strain P125109).